The following is a 646-amino-acid chain: Protein real-time (646 aa).

The PRELI/MSF1 domain maps to Val-2–Ile-175. The CRAL-TRIO domain maps to Thr-294–Ile-471. Residues His-499 to Arg-646 form the GOLD domain.

It localises to the mitochondrion. This Aedes aegypti (Yellowfever mosquito) protein is Protein real-time.